The following is a 460-amino-acid chain: Nucleosome assembly protein 1-like 2 (460 aa).

The segment covering 1 to 11 has biased composition (basic and acidic residues); it reads MAESVDHKELS. Disordered stretches follow at residues 1–87 and 213–238; these read MAES…DSDR and DEEEEEEEDDSAGATGGEEVNEEDPK. Acidic residues predominate over residues 213-223; it reads DEEEEEEEDDS. The Nuclear localization signal motif lies at 346-352; that stretch reads IKKKQRH.

This sequence belongs to the nucleosome assembly protein (NAP) family. In terms of tissue distribution, brain, specifically expressed in neurons.

It localises to the nucleus. Its function is as follows. Acidic protein which may be involved in interactions with other proteins or DNA. This is Nucleosome assembly protein 1-like 2 (Nap1l2) from Mus musculus (Mouse).